Reading from the N-terminus, the 316-residue chain is Ribosomal protein L11 methyltransferase (316 aa).

4 residues coordinate S-adenosyl-L-methionine: T157, G178, D200, and N243.

The protein belongs to the methyltransferase superfamily. PrmA family.

The protein localises to the cytoplasm. It catalyses the reaction L-lysyl-[protein] + 3 S-adenosyl-L-methionine = N(6),N(6),N(6)-trimethyl-L-lysyl-[protein] + 3 S-adenosyl-L-homocysteine + 3 H(+). Functionally, methylates ribosomal protein L11. In Streptococcus pneumoniae serotype 4 (strain ATCC BAA-334 / TIGR4), this protein is Ribosomal protein L11 methyltransferase.